The primary structure comprises 465 residues: Methionine aminopeptidase 2-2 (465 aa).

Positions 1 to 13 (MGSKTPNDHRRGP) are enriched in basic and acidic residues. The interval 1 to 92 (MGSKTPNDHR…KKKTLLGGLQ (92 aa)) is disordered. Positions 44–55 (GETEDGEDEDDD) are enriched in acidic residues. Basic residues predominate over residues 71–86 (TKKKNKRKKNKKKKKT). A substrate-binding site is contributed by His-217. A divalent metal cation-binding residues include Asp-238, Asp-249, and His-318. Substrate is bound at residue His-326. Glu-351 and Glu-446 together coordinate a divalent metal cation.

This sequence belongs to the peptidase M24A family. Methionine aminopeptidase eukaryotic type 2 subfamily. It depends on Co(2+) as a cofactor. Zn(2+) is required as a cofactor. The cofactor is Mn(2+). Requires Fe(2+) as cofactor.

The protein resides in the cytoplasm. The catalysed reaction is Release of N-terminal amino acids, preferentially methionine, from peptides and arylamides.. Functionally, cotranslationally removes the N-terminal methionine from nascent proteins. The N-terminal methionine is often cleaved when the second residue in the primary sequence is small and uncharged (Met-Ala-, Cys, Gly, Pro, Ser, Thr, or Val). The sequence is that of Methionine aminopeptidase 2-2 from Blastomyces gilchristii (strain SLH14081) (Blastomyces dermatitidis).